Consider the following 592-residue polypeptide: Protein alan shepard (592 aa).

Residues 1-68 (MGGPHHQHQQ…ASVAAAPPTP (68 aa)) form a disordered region. The segment covering 18–28 (VGGGNGHGGGA) has biased composition (gly residues). Residues 36 to 54 (PNSQQLPPQMPRSQNYANG) show a composition bias toward polar residues. The segment covering 55–64 (SSSAASVAAA) has biased composition (low complexity). Tyr124 and Tyr140 each carry phosphotyrosine. A disordered region spans residues 162–224 (PATTTYGQRV…AQNQNQQGGE (63 aa)). Residues 176–224 (SPSNTNSSSSSNTGSQSGTLSTSLSNTTNTNTTMGPNGTAQNQNQQGGE) show a composition bias toward low complexity. 2 consecutive RRM domains span residues 229 to 307 (TNLY…IWVL) and 319 to 398 (TNLY…FADG). The tract at residues 565-592 (PMTDSEQASTAASPDEAYTQYPHQAAPK) is disordered.

Its function is as follows. Has a role in the perception of gravity. The protein is Protein alan shepard of Drosophila mojavensis (Fruit fly).